The following is a 378-amino-acid chain: Succinyl-diaminopimelate desuccinylase (378 aa).

His66 is a Zn(2+) binding site. Asp68 is a catalytic residue. Zn(2+) is bound at residue Asp100. Glu134 acts as the Proton acceptor in catalysis. Zn(2+)-binding residues include Glu135, Glu163, and His350.

The protein belongs to the peptidase M20A family. DapE subfamily. As to quaternary structure, homodimer. Zn(2+) is required as a cofactor. Requires Co(2+) as cofactor.

The enzyme catalyses N-succinyl-(2S,6S)-2,6-diaminopimelate + H2O = (2S,6S)-2,6-diaminopimelate + succinate. It functions in the pathway amino-acid biosynthesis; L-lysine biosynthesis via DAP pathway; LL-2,6-diaminopimelate from (S)-tetrahydrodipicolinate (succinylase route): step 3/3. In terms of biological role, catalyzes the hydrolysis of N-succinyl-L,L-diaminopimelic acid (SDAP), forming succinate and LL-2,6-diaminopimelate (DAP), an intermediate involved in the bacterial biosynthesis of lysine and meso-diaminopimelic acid, an essential component of bacterial cell walls. The polypeptide is Succinyl-diaminopimelate desuccinylase (Hydrogenovibrio crunogenus (strain DSM 25203 / XCL-2) (Thiomicrospira crunogena)).